The following is a 760-amino-acid chain: 5-methyltetrahydropteroyltriglutamate--homocysteine methyltransferase (760 aa).

5-methyltetrahydropteroyltri-L-glutamate-binding positions include 17–20 (RELK) and Lys113. Residues 433–435 (IGS) and Glu486 each bind L-homocysteine. Residues 433 to 435 (IGS) and Glu486 contribute to the L-methionine site. 5-methyltetrahydropteroyltri-L-glutamate contacts are provided by residues 517 to 518 (RC) and Trp563. Asp601 lines the L-homocysteine pocket. An L-methionine-binding site is contributed by Asp601. Glu607 provides a ligand contact to 5-methyltetrahydropteroyltri-L-glutamate. Zn(2+)-binding residues include His643, Cys645, and Glu667. The Proton donor role is filled by His696. Cys728 is a binding site for Zn(2+).

It belongs to the vitamin-B12 independent methionine synthase family. Zn(2+) serves as cofactor.

It carries out the reaction 5-methyltetrahydropteroyltri-L-glutamate + L-homocysteine = tetrahydropteroyltri-L-glutamate + L-methionine. Its pathway is amino-acid biosynthesis; L-methionine biosynthesis via de novo pathway; L-methionine from L-homocysteine (MetE route): step 1/1. Its function is as follows. Catalyzes the transfer of a methyl group from 5-methyltetrahydrofolate to homocysteine resulting in methionine formation. The protein is 5-methyltetrahydropteroyltriglutamate--homocysteine methyltransferase of Chromobacterium violaceum (strain ATCC 12472 / DSM 30191 / JCM 1249 / CCUG 213 / NBRC 12614 / NCIMB 9131 / NCTC 9757 / MK).